A 319-amino-acid chain; its full sequence is Aspartate carbamoyltransferase catalytic subunit (319 aa).

Residues R57 and T58 each coordinate carbamoyl phosphate. L-aspartate is bound at residue K85. Carbamoyl phosphate contacts are provided by R107, H140, and Q143. L-aspartate is bound by residues R173 and R227. G268 and P269 together coordinate carbamoyl phosphate.

It belongs to the aspartate/ornithine carbamoyltransferase superfamily. ATCase family. As to quaternary structure, heterododecamer (2C3:3R2) of six catalytic PyrB chains organized as two trimers (C3), and six regulatory PyrI chains organized as three dimers (R2).

It carries out the reaction carbamoyl phosphate + L-aspartate = N-carbamoyl-L-aspartate + phosphate + H(+). It participates in pyrimidine metabolism; UMP biosynthesis via de novo pathway; (S)-dihydroorotate from bicarbonate: step 2/3. Catalyzes the condensation of carbamoyl phosphate and aspartate to form carbamoyl aspartate and inorganic phosphate, the committed step in the de novo pyrimidine nucleotide biosynthesis pathway. This chain is Aspartate carbamoyltransferase catalytic subunit, found in Mycobacterium tuberculosis (strain ATCC 25177 / H37Ra).